The chain runs to 399 residues: Succinate--CoA ligase [ADP-forming] subunit beta (399 aa).

The ATP-grasp domain maps to Lys-9–Glu-254. ATP is bound by residues Lys-46, Gly-53–Gly-55, Val-112, and Glu-117. Positions 209 and 223 each coordinate Mg(2+). Substrate contacts are provided by residues Asn-274 and Gly-331–Met-333.

Belongs to the succinate/malate CoA ligase beta subunit family. As to quaternary structure, heterotetramer of two alpha and two beta subunits. The cofactor is Mg(2+).

The catalysed reaction is succinate + ATP + CoA = succinyl-CoA + ADP + phosphate. It carries out the reaction GTP + succinate + CoA = succinyl-CoA + GDP + phosphate. It functions in the pathway carbohydrate metabolism; tricarboxylic acid cycle; succinate from succinyl-CoA (ligase route): step 1/1. Functionally, succinyl-CoA synthetase functions in the citric acid cycle (TCA), coupling the hydrolysis of succinyl-CoA to the synthesis of either ATP or GTP and thus represents the only step of substrate-level phosphorylation in the TCA. The beta subunit provides nucleotide specificity of the enzyme and binds the substrate succinate, while the binding sites for coenzyme A and phosphate are found in the alpha subunit. The chain is Succinate--CoA ligase [ADP-forming] subunit beta from Erythrobacter litoralis (strain HTCC2594).